The sequence spans 233 residues: Small ribosomal subunit protein uS3 (233 aa).

One can recognise a KH type-2 domain in the interval 39–107; that stretch reads VRQFLMKTLE…PVQINISEVR (69 aa).

It belongs to the universal ribosomal protein uS3 family. In terms of assembly, part of the 30S ribosomal subunit. Forms a tight complex with proteins S10 and S14.

In terms of biological role, binds the lower part of the 30S subunit head. Binds mRNA in the 70S ribosome, positioning it for translation. The protein is Small ribosomal subunit protein uS3 of Buchnera aphidicola subsp. Acyrthosiphon pisum (strain APS) (Acyrthosiphon pisum symbiotic bacterium).